We begin with the raw amino-acid sequence, 569 residues long: Glutamate--tRNA ligase (569 aa).

Positions proline 99–histidine 109 match the 'HIGH' region motif.

This sequence belongs to the class-I aminoacyl-tRNA synthetase family. Glutamate--tRNA ligase type 2 subfamily.

The protein resides in the cytoplasm. The catalysed reaction is tRNA(Glu) + L-glutamate + ATP = L-glutamyl-tRNA(Glu) + AMP + diphosphate. Functionally, catalyzes the attachment of glutamate to tRNA(Glu) in a two-step reaction: glutamate is first activated by ATP to form Glu-AMP and then transferred to the acceptor end of tRNA(Glu). This is Glutamate--tRNA ligase from Korarchaeum cryptofilum (strain OPF8).